Consider the following 148-residue polypeptide: MAQMTVQVVTPDGLKYDHHASFIHAVTKDGQIGILPGHINLIAPLEVDELKVRRVDDESHVDWIAVNGGIIEVKDDFITIIANSAERDRDIDVSRAERAKQRAERVLEEETKRVLEKATKSDRNDDVQRAQIALRRALNRINVGTKIR.

Belongs to the ATPase epsilon chain family. F-type ATPases have 2 components, CF(1) - the catalytic core - and CF(0) - the membrane proton channel. CF(1) has five subunits: alpha(3), beta(3), gamma(1), delta(1), epsilon(1). CF(0) has three main subunits: a, b and c.

It is found in the cell membrane. In terms of biological role, produces ATP from ADP in the presence of a proton gradient across the membrane. The protein is ATP synthase epsilon chain of Streptococcus thermophilus (strain ATCC BAA-250 / LMG 18311).